Here is a 967-residue protein sequence, read N- to C-terminus: Regulator of G-protein signaling 3 (967 aa).

Positions 18–95 (QITIRRGKDG…EIILLVWRVV (78 aa)) constitute a PDZ domain. Residues 115–135 (THDLLSPPNKREKNCTHGAPT) are disordered. Position 167 is an omega-N-methylarginine (Arg-167). The tract at residues 389 to 705 (QLAATPTERK…EGGLSLRVQN (317 aa)) is disordered. 3 stretches are compositionally biased toward polar residues: residues 476 to 486 (LPSSKNPSPSQ), 512 to 549 (SPSS…TEVP), and 577 to 597 (SSAS…QGSL). Residues 650–676 (GEDEDAEEGEEGEEGEEDEEDDTNDDN) are compositionally biased toward acidic residues. The span at 677-687 (YGDRNEAKRSS) shows a compositional bias: basic and acidic residues. 4 positions are modified to phosphoserine: Ser-713, Ser-716, Ser-748, and Ser-777. The tract at residues 807 to 830 (FRRRNESPGAQPAGKADKTTKSFK) is disordered. Positions 821–830 (KADKTTKSFK) are enriched in basic and acidic residues. Residues 842–967 (SLEKLLLHKY…INQKKMSPPL (126 aa)) form the RGS domain.

As to quaternary structure, binds EFNB1 and EFNB2. Binds the GNB1-GNG2 heterodimer. Binds ESR1. Phosphorylated by cyclic GMP-dependent protein kinase. Post-translationally, ISGylated. As to expression, detected in kidney, uterus, ovary, heart, brain, spleen, lung and testis.

It localises to the cytoplasm. It is found in the membrane. The protein resides in the nucleus. Its function is as follows. Down-regulates signaling from heterotrimeric G-proteins by increasing the GTPase activity of the alpha subunits, thereby driving them into their inactive GDP-bound form. Down-regulates G-protein-mediated release of inositol phosphates and activation of MAP kinases. The protein is Regulator of G-protein signaling 3 (Rgs3) of Rattus norvegicus (Rat).